A 265-amino-acid chain; its full sequence is NAD kinase 1 (265 aa).

The active-site Proton acceptor is the aspartate 45. Residues 45–46 (DG), histidine 50, 122–123 (NE), arginine 148, aspartate 150, and alanine 185 each bind NAD(+).

The protein belongs to the NAD kinase family. The cofactor is a divalent metal cation.

The protein resides in the cytoplasm. It catalyses the reaction NAD(+) + ATP = ADP + NADP(+) + H(+). In terms of biological role, involved in the regulation of the intracellular balance of NAD and NADP, and is a key enzyme in the biosynthesis of NADP. Catalyzes specifically the phosphorylation on 2'-hydroxyl of the adenosine moiety of NAD to yield NADP. This Halalkalibacterium halodurans (strain ATCC BAA-125 / DSM 18197 / FERM 7344 / JCM 9153 / C-125) (Bacillus halodurans) protein is NAD kinase 1.